The sequence spans 156 residues: Endogenous retrovirus group K member 8 Pro protein (156 aa).

The region spanning 21-96 (FEGLVDTGAD…IPLNLWGRDL (76 aa)) is the Peptidase A2 domain. D26 is a catalytic residue. A G-patch domain is found at 111–156 (YSPTSQKIMTKRGYIPGKGLGKNEDGIKIPFEAKINQKREGIGYPF).

It belongs to the peptidase A2 family. HERV class-II K(HML-2) subfamily. As to quaternary structure, active as a homodimer. Post-translationally, autoproteolytically processed at the N-terminus. Expected C-terminal autoprocessing not detected. The sequence shown is that of the processed Pro protein.

It catalyses the reaction Processing at the authentic HIV-1 PR recognition site and release of the mature p17 matrix and the p24 capsid protein, as a result of the cleavage of the -SQNY-|-PIVQ- cleavage site.. Its function is as follows. Retroviral proteases have roles in the processing of the primary translation products and the maturation of the viral particle. Endogenous Pro proteins may have kept, lost or modified their original function during evolution. The polypeptide is Endogenous retrovirus group K member 8 Pro protein (ERVK-8) (Homo sapiens (Human)).